The sequence spans 136 residues: Small ribosomal subunit protein uS9 (136 aa).

The interval 97–136 (SPDNRKPLKTEGHLSRDPRAKERRKYGLKKARKAPQFSKR) is disordered. Residues 98–116 (PDNRKPLKTEGHLSRDPRA) show a composition bias toward basic and acidic residues. Basic residues predominate over residues 117–136 (KERRKYGLKKARKAPQFSKR).

It belongs to the universal ribosomal protein uS9 family.

The polypeptide is Small ribosomal subunit protein uS9 (Prochlorococcus marinus (strain AS9601)).